Here is a 769-residue protein sequence, read N- to C-terminus: MSQIPVATLGVPRIGRRRELKFALEAYWGGESSEGELLAAAAKIRAENWSLQKAAGASIIPSNDFTLYDHVLDMAVTLGAIPEIYGWAGGAVPLDTYFAMARGSQEREACGHSHHDGTGVPALEMTKWFDTNYHYMVPEFDADQTFRLASLKPVEEFDEAKRQGIHTRPVLLGPVSFLKLGKRRDGGDPLELLPRLVPVYAELLGKLLRAGADWVQIDEPCLVLDLTERERRAFTIAYDALAATGGPKLMLATYFGGLGDNLPTAAALPVAGLHLDLVRAPDQLQDVLSAAPEERVISLGVVDGRNIWRTDIAALLDRLGPIVKGNPGRFQLAPSCSLLHVPLDLSIETGVDPELRSWLAFAVQKVEELSILSHALSADRSLVQSLIDMASRALAVRASSTRVNDPHVAGRLSAVTPEMAKRSEPFSERRKLQQERLNLPAFPTTTIGSFPQTAEVRQARAACAKGELSEAGYDGFLKGETEKAIRWQEEIGIDVLVHGEFERNDMVQYFSEQLSGYAFTKQGWVQSYGSRCVRPPIIFGDVSRPQPMTVDWATYAQSLTDKPVKGMLTGPVTMLQWSFVRDDLPRETVCRQIAFALRDEVSDLEAAGIGVIQIDEPALREGLPLREAERPAYLDWAVECFRLASSGVKPETQIHTHMCYAEFNDIIDAIAAMDADVISIETSRSKMELLRAFRAFRYPNDIGPGVFDIHSPRVPPADEMADLLRKAEDGLDPRQIWVNPDCGLKTRKWEEVRFALANMVEAARQMRAG.

Residues 18–21 (RELK) and Lys-127 contribute to the 5-methyltetrahydropteroyltri-L-glutamate site. L-homocysteine-binding positions include 447–449 (IGS) and Glu-500. L-methionine contacts are provided by residues 447–449 (IGS) and Glu-500. Residues 531–532 (RC) and Trp-577 each bind 5-methyltetrahydropteroyltri-L-glutamate. Asp-615 is an L-homocysteine binding site. Asp-615 is an L-methionine binding site. Glu-621 provides a ligand contact to 5-methyltetrahydropteroyltri-L-glutamate. Zn(2+) is bound by residues His-657, Cys-659, and Glu-681. His-710 (proton donor) is an active-site residue. A Zn(2+)-binding site is contributed by Cys-742.

This sequence belongs to the vitamin-B12 independent methionine synthase family. It depends on Zn(2+) as a cofactor.

It carries out the reaction 5-methyltetrahydropteroyltri-L-glutamate + L-homocysteine = tetrahydropteroyltri-L-glutamate + L-methionine. It participates in amino-acid biosynthesis; L-methionine biosynthesis via de novo pathway; L-methionine from L-homocysteine (MetE route): step 1/1. Its function is as follows. Catalyzes the transfer of a methyl group from 5-methyltetrahydrofolate to homocysteine resulting in methionine formation. This chain is 5-methyltetrahydropteroyltriglutamate--homocysteine methyltransferase, found in Chelativorans sp. (strain BNC1).